We begin with the raw amino-acid sequence, 193 residues long: Transcriptional activator GvpE2 (193 aa).

143 to 148 (KRKVYR) is a binding site for DNA. Residues 153–184 (QAAIEHVDSVVLQLLTFAVGLQTIMADCIVNQ) form a leucine-zipper region.

Homodimer. Interacts with endogenous GvpD, also with GvpD from H.mediterranei.

It is found in the cytoplasm. Degraded once GvpD is translated; degradation requires 'Arg-494' of GvpD; tested in transgenic H.volcanii. Fusion of green fluorescent protein to its C-terminus partially protects it from degradation. Functionally, plays a regulatory role in gas vesicle synthesis, required to activate transcription of the c-gvpA operon. Gas vesicles are hollow, gas filled proteinaceous nanostructures found in several microbial planktonic microorganisms. They allow positioning of halobacteria at the optimal depth for growth in the poorly aerated, shallow brine pools of their habitat. In terms of biological role, expression of 2 c-vac DNA fragments containing 2 divergently transcribed regions (gvpE-gvpF-gvpG-gvpH-gvpI-gvpJ-gvpK-gvpL-gvpM and gvpA-gvpC-gvpN-gvpO) allows H.volcanii to produce gas vesicles. All site-directed mutagenesis is tested in H.volcanii. This chain is Transcriptional activator GvpE2, found in Halobacterium salinarum (strain ATCC 700922 / JCM 11081 / NRC-1) (Halobacterium halobium).